The primary structure comprises 404 residues: Cysteine desulfurase IscS (404 aa).

Residues 75–76, Asn155, Gln183, and 203–205 contribute to the pyridoxal 5'-phosphate site; these read AT and SGH. Lys206 is modified (N6-(pyridoxal phosphate)lysine). Thr243 contributes to the pyridoxal 5'-phosphate binding site. Cys328 serves as the catalytic Cysteine persulfide intermediate. Cys328 is a binding site for [2Fe-2S] cluster.

Belongs to the class-V pyridoxal-phosphate-dependent aminotransferase family. NifS/IscS subfamily. In terms of assembly, homodimer. Forms a heterotetramer with IscU, interacts with other sulfur acceptors. Pyridoxal 5'-phosphate is required as a cofactor.

The protein resides in the cytoplasm. It carries out the reaction (sulfur carrier)-H + L-cysteine = (sulfur carrier)-SH + L-alanine. The protein operates within cofactor biosynthesis; iron-sulfur cluster biosynthesis. Its function is as follows. Master enzyme that delivers sulfur to a number of partners involved in Fe-S cluster assembly, tRNA modification or cofactor biosynthesis. Catalyzes the removal of elemental sulfur atoms from cysteine to produce alanine. Functions as a sulfur delivery protein for Fe-S cluster synthesis onto IscU, an Fe-S scaffold assembly protein, as well as other S acceptor proteins. The protein is Cysteine desulfurase IscS of Shewanella baltica (strain OS223).